We begin with the raw amino-acid sequence, 309 residues long: UDP-N-acetylenolpyruvoylglucosamine reductase (309 aa).

In terms of domain architecture, FAD-binding PCMH-type spans 34–221; the sequence is RVGGPAQVLF…TAAREAAQPI (188 aa). Arg179 is a catalytic residue. Catalysis depends on Ser228, which acts as the Proton donor. The active site involves Glu298.

This sequence belongs to the MurB family. The cofactor is FAD.

Its subcellular location is the cytoplasm. It carries out the reaction UDP-N-acetyl-alpha-D-muramate + NADP(+) = UDP-N-acetyl-3-O-(1-carboxyvinyl)-alpha-D-glucosamine + NADPH + H(+). The protein operates within cell wall biogenesis; peptidoglycan biosynthesis. Cell wall formation. In Methylorubrum extorquens (strain PA1) (Methylobacterium extorquens), this protein is UDP-N-acetylenolpyruvoylglucosamine reductase.